We begin with the raw amino-acid sequence, 544 residues long: Esterase-6 (544 aa).

An N-terminal signal peptide occupies residues Met1–Ala21. A glycan (N-linked (GlcNAc...) asparagine) is linked at Asn42. Cys86 and Cys105 are disulfide-bonded. Ser209 serves as the catalytic Acyl-ester intermediate. Cysteines 261 and 273 form a disulfide. Residues Asn420 and Asn456 are each glycosylated (N-linked (GlcNAc...) asparagine). His466 (charge relay system) is an active-site residue. Asn506 carries N-linked (GlcNAc...) asparagine glycosylation. A disulfide bridge links Cys514 with Cys535.

It belongs to the type-B carboxylesterase/lipase family. In terms of assembly, monomer. In terms of tissue distribution, specifically expressed in the ejaculatory bulbs of male.

The protein localises to the secreted. The enzyme catalyses a carboxylic ester + H2O = an alcohol + a carboxylate + H(+). In terms of biological role, transferred from the ejaculatory bulbs of males to the female genitals upon copulation, plays an important role in the reproductive biology. This chain is Esterase-6 (Est-6), found in Drosophila melanogaster (Fruit fly).